The chain runs to 454 residues: Phenylalanine--tRNA ligase, mitochondrial (454 aa).

Substrate contacts are provided by residues 141–144 (SAHQ), Arg163, 170–172 (VHY), 177–179 (QME), Glu266, and Phe291. The interval 327–347 (KSISTSSSSSSSSSSSSSSTL) is disordered. Residues 328 to 347 (SISTSSSSSSSSSSSSSSTL) show a composition bias toward low complexity. The region spanning 361-454 (SKYPSCFKDV…LENHLSVKLR (94 aa)) is the FDX-ACB domain.

This sequence belongs to the class-II aminoacyl-tRNA synthetase family. In terms of assembly, monomer.

Its subcellular location is the mitochondrion matrix. It catalyses the reaction tRNA(Phe) + L-phenylalanine + ATP = L-phenylalanyl-tRNA(Phe) + AMP + diphosphate + H(+). In terms of biological role, is responsible for the charging of tRNA(Phe) with phenylalanine in mitochondrial translation. This is Phenylalanine--tRNA ligase, mitochondrial (mpheS) from Dictyostelium discoideum (Social amoeba).